Here is an 874-residue protein sequence, read N- to C-terminus: Alanine--tRNA ligase (874 aa).

Residues H563, H567, C665, and H669 each contribute to the Zn(2+) site.

This sequence belongs to the class-II aminoacyl-tRNA synthetase family. Zn(2+) serves as cofactor.

It localises to the cytoplasm. The catalysed reaction is tRNA(Ala) + L-alanine + ATP = L-alanyl-tRNA(Ala) + AMP + diphosphate. Its function is as follows. Catalyzes the attachment of alanine to tRNA(Ala) in a two-step reaction: alanine is first activated by ATP to form Ala-AMP and then transferred to the acceptor end of tRNA(Ala). Also edits incorrectly charged Ser-tRNA(Ala) and Gly-tRNA(Ala) via its editing domain. The polypeptide is Alanine--tRNA ligase (Haemophilus influenzae (strain ATCC 51907 / DSM 11121 / KW20 / Rd)).